We begin with the raw amino-acid sequence, 341 residues long: MHIVLEFFLVTFRVLWAFVLAAGKWLLRPKDKSVAGQVCLITGAGSGLGRLFALEFARRRAQLVLWDINSQSNEETAEMVRNIYRELEAEDSARRANSSAEEEVLPCCNLKVYTYTCDVGKRESVYSTAERVRREVGDVYLLLNNAGVVSGHHLLECPDELIERTMMVNCHAHFWTTKAFLPKMMELNHGHIVSVASSLGLFSTAGVEDYCASKFGVVGFHESLSHEIKASDKDGIKTTLVCPYLVDTGMFRGCRIRKEIEPFLPPLKPDYCVKQAMRAILTDQPMICTPRLMYIVTCMKSILPFEAVVCMYRFLGADKCMYPFIAQRKQATNNNEAKNGI.

Residues 3–23 form a helical; Signal-anchor membrane-spanning segment; the sequence is IVLEFFLVTFRVLWAFVLAAG. 40–64 serves as a coordination point for NADP(+); that stretch reads LITGAGSGLGRLFALEFARRRAQLV. Position 197 (Ser197) interacts with substrate. Tyr210 acts as the Proton acceptor in catalysis.

This sequence belongs to the short-chain dehydrogenases/reductases (SDR) family.

The protein localises to the microsome membrane. Its subcellular location is the endoplasmic reticulum membrane. It catalyses the reaction all-trans-retinol + NADP(+) = all-trans-retinal + NADPH + H(+). Its pathway is cofactor metabolism; retinol metabolism. Functionally, retinol dehydrogenase with a clear preference for NADP. Converts all-trans-retinol to all-trans-retinal. Has no detectable activity towards 11-cis-retinol, 9-cis-retinol and 13-cis-retinol. The polypeptide is Retinol dehydrogenase 10-A (rdh10-a) (Xenopus laevis (African clawed frog)).